The primary structure comprises 291 residues: GTPase Era (291 aa).

In terms of domain architecture, Era-type G spans 2–167 (KSGFVSIIGR…LDEIVKYLDE (166 aa)). The G1 stretch occupies residues 10-17 (GRTNAGKS). 10 to 17 (GRTNAGKS) lines the GTP pocket. The interval 36–40 (NATRR) is G2. The G3 stretch occupies residues 57–60 (DTPG). Residues 57–61 (DTPGL) and 116–119 (NKVD) each bind GTP. The interval 116-119 (NKVD) is G4. Positions 146–148 (YSS) are G5. Residues 186–274 (YRDFILESIY…LLKLFVTVKK (89 aa)) enclose the KH type-2 domain.

It belongs to the TRAFAC class TrmE-Era-EngA-EngB-Septin-like GTPase superfamily. Era GTPase family. As to quaternary structure, monomer.

The protein localises to the cytoplasm. Its subcellular location is the cell inner membrane. In terms of biological role, an essential GTPase that binds both GDP and GTP, with rapid nucleotide exchange. Plays a role in 16S rRNA processing and 30S ribosomal subunit biogenesis and possibly also in cell cycle regulation and energy metabolism. This chain is GTPase Era, found in Campylobacter jejuni (strain RM1221).